The following is a 335-amino-acid chain: MNTEATHDQNEALTTGARLRNAREQLGLSQQAVAERLCLKVSTVRDIEEDKAPADLASTFLRGYIRSYARLVHIPEEELLPGLEKQAPLRAAKVAPMQSFSLGKRRKKRDGWLMTFTWLVLFVVIGLSGAWWWQDHKAQQEEITTMADQSSAELNNNQSQSVPLDTSTTTDQAMATTPTSPVDTTATNTQTPAVTAPAPAVDPQQNAVVPPSQANVDTAATPAPAATTTPDSAAPLPTDQAGVTTPAVDPNALVMNFTADCWLEVTDATGKKLFSGMQRKDGNLNLTGQAPYKLKIGAPAAVQIQYQGKPVDLSRFIRTNQVARLTLNAEQSPAQ.

The Cytoplasmic segment spans residues 1 to 111; the sequence is MNTEATHDQN…LGKRRKKRDG (111 aa). The HTH cro/C1-type domain maps to 19 to 71; the sequence is LRNAREQLGLSQQAVAERLCLKVSTVRDIEEDKAPADLASTFLRGYIRSYARL. Residues 30–49 constitute a DNA-binding region (H-T-H motif); sequence QQAVAERLCLKVSTVRDIEE. The chain crosses the membrane as a helical; Signal-anchor for type II membrane protein span at residues 112-132; sequence WLMTFTWLVLFVVIGLSGAWW. Residues 133–335 are Periplasmic-facing; that stretch reads WQDHKAQQEE…TLNAEQSPAQ (203 aa). A compositionally biased stretch (polar residues) spans 148–164; sequence DQSSAELNNNQSQSVPL. The segment at 148–244 is disordered; that stretch reads DQSSAELNNN…PLPTDQAGVT (97 aa). Low complexity-rich tracts occupy residues 165–205 and 217–239; these read DTST…DPQQ and DTAA…LPTD.

This sequence belongs to the RodZ family.

The protein localises to the cell inner membrane. In terms of biological role, cytoskeletal protein that is involved in cell-shape control through regulation of the length of the long axis. This is Cytoskeleton protein RodZ from Escherichia coli O81 (strain ED1a).